The following is a 128-amino-acid chain: Small ribosomal subunit protein uS14m (128 aa).

This sequence belongs to the universal ribosomal protein uS14 family. As to quaternary structure, component of the mitochondrial small ribosomal subunit (mt-SSU). Mature mammalian 55S mitochondrial ribosomes consist of a small (28S) and a large (39S) subunit. The 28S small subunit contains a 12S ribosomal RNA (12S mt-rRNA) and 30 different proteins. The 39S large subunit contains a 16S rRNA (16S mt-rRNA), a copy of mitochondrial valine transfer RNA (mt-tRNA(Val)), which plays an integral structural role, and 52 different proteins. Interacts with LIAT1.

Its subcellular location is the mitochondrion. This Homo sapiens (Human) protein is Small ribosomal subunit protein uS14m.